An 802-amino-acid chain; its full sequence is Endoplasmin (802 aa).

Residues Met-1–Ala-21 form the signal peptide. The SRT pseudosubstrate motif signature appears at Ser-42–Thr-44. A glycan (N-linked (GlcNAc...) asparagine) is linked at Asn-62. At Ser-64 the chain carries Phosphoserine. Asn-107 carries an N-linked (GlcNAc...) asparagine glycan. ATP contacts are provided by Asn-107, Asp-149, and Asn-162. Residue Lys-168 is modified to N6-(2-hydroxyisobutyryl)lysine. A Phosphoserine modification is found at Ser-172. Phe-199 contacts ATP. An N-linked (GlcNAc...) asparagine glycan is attached at Asn-217. The span at Glu-290–Glu-317 shows a compositional bias: acidic residues. Residues Glu-290–Thr-323 form a disordered region. Residues Ser-306 and Ser-403 each carry the phosphoserine modification. The residue at position 404 (Lys-404) is an N6-succinyllysine. Asn-445 is a glycosylation site (N-linked (GlcNAc...) asparagine). Ser-447 is subject to Phosphoserine. The residue at position 479 (Lys-479) is an N6-acetyllysine. Asn-481 and Asn-502 each carry an N-linked (GlcNAc...) asparagine glycan. N6-succinyllysine is present on Lys-633. Positions Ile-749–Leu-802 are disordered. The span at Ala-753–Glu-793 shows a compositional bias: acidic residues. At Thr-785 the chain carries Phosphothreonine. A Prevents secretion from ER motif is present at residues Lys-799–Leu-802.

Belongs to the heat shock protein 90 family. In terms of assembly, homodimer; disulfide-linked. Component of an EIF2 complex at least composed of CELF1/CUGBP1, CALR, CALR3, EIF2S1, EIF2S2, HSP90B1 and HSPA5. Part of a large chaperone multiprotein complex comprising DNAJB11, HSP90B1, HSPA5, HYOU, PDIA2, PDIA4, PDIA6, PPIB, SDF2L1, UGGT1 and very small amounts of ERP29, but not, or at very low levels, CALR nor CANX. Hyperglycosylated form interacts with OS9; promoting its degradation by the endoplasmic reticulum associated degradation (ERAD). Interacts with AIMP1; regulates its retention in the endoplasmic reticulum. Interacts with CNPY3; this interaction is disrupted in the presence of ATP. Interacts with TLR4, TLR9 and TLR11, but not with TLR3. Interacts with MZB1 in a calcium-dependent manner. Interacts with METTL23. Interacts with IL1B; the interaction facilitates cargo translocation into the ERGIC. Interacts with EIF2AK3. Phosphorylated by CK2. Post-translationally, N-glycosylated cotranslationally at Asn-217 by STT3A-containing OST-A complex: this glycosylation is constitutive. In response to various stress, 5 additional facultative sites (Asn-62, Asn-107, Asn-445, Asn-481 and Asn-502) can be glycosylated post-translationally by STT3B-containing OST-B complex, leading to a hyperglycosylated form that is degraded by the ER-associated degradation (ERAD) pathway. In normal conditions, the OST-A complex together with CCDC134 prevent glycosylation at facultative sites during protein folding, thereby preventing hyperglycosylation. Mechanistically, nascent HSP90B1 is tethered during translation to a specialized CCDC134-containing translocon that forms a microenvironment for its folding, in which STT3A associates with the SRT pseudosubstrate motif, and prevents access to facultative glycosylation sites until folding is completed, rendering its facultative sites inaccessible to the OST-B complex.

The protein localises to the endoplasmic reticulum lumen. It localises to the sarcoplasmic reticulum lumen. It is found in the melanosome. It catalyses the reaction ATP + H2O = ADP + phosphate + H(+). Its function is as follows. ATP-dependent chaperone involved in the processing of proteins in the endoplasmic reticulum, regulating their transport. Together with MESD, acts as a modulator of the Wnt pathway by promoting the folding of LRP6, a coreceptor of the canonical Wnt pathway. When associated with CNPY3, required for proper folding of Toll-like receptors. Promotes folding and trafficking of TLR4 to the cell surface. May participate in the unfolding of cytosolic leaderless cargos (lacking the secretion signal sequence) such as the interleukin 1/IL-1 to facilitate their translocation into the ERGIC (endoplasmic reticulum-Golgi intermediate compartment) and secretion; the translocation process is mediated by the cargo receptor TMED10. The sequence is that of Endoplasmin (Hsp90b1) from Mus musculus (Mouse).